The sequence spans 360 residues: DNA replication and repair protein RecF (360 aa).

Residue 33–40 (GENGSGKT) participates in ATP binding.

Belongs to the RecF family.

Its subcellular location is the cytoplasm. Its function is as follows. The RecF protein is involved in DNA metabolism; it is required for DNA replication and normal SOS inducibility. RecF binds preferentially to single-stranded, linear DNA. It also seems to bind ATP. This chain is DNA replication and repair protein RecF, found in Rickettsia massiliae (strain Mtu5).